Consider the following 274-residue polypeptide: 4-hydroxy-3-methylbut-2-enyl diphosphate reductase (274 aa).

Cysteine 12 is a [4Fe-4S] cluster binding site. Residues histidine 36 and histidine 70 each coordinate (2E)-4-hydroxy-3-methylbut-2-enyl diphosphate. The dimethylallyl diphosphate site is built by histidine 36 and histidine 70. The isopentenyl diphosphate site is built by histidine 36 and histidine 70. Cysteine 92 is a binding site for [4Fe-4S] cluster. Position 120 (histidine 120) interacts with (2E)-4-hydroxy-3-methylbut-2-enyl diphosphate. Histidine 120 lines the dimethylallyl diphosphate pocket. Histidine 120 is a binding site for isopentenyl diphosphate. Glutamate 122 (proton donor) is an active-site residue. Residue threonine 158 participates in (2E)-4-hydroxy-3-methylbut-2-enyl diphosphate binding. Cysteine 186 contacts [4Fe-4S] cluster. Serine 214, serine 215, asparagine 216, and serine 258 together coordinate (2E)-4-hydroxy-3-methylbut-2-enyl diphosphate. Positions 214, 215, 216, and 258 each coordinate dimethylallyl diphosphate. Serine 214, serine 215, asparagine 216, and serine 258 together coordinate isopentenyl diphosphate.

This sequence belongs to the IspH family. The cofactor is [4Fe-4S] cluster.

The catalysed reaction is isopentenyl diphosphate + 2 oxidized [2Fe-2S]-[ferredoxin] + H2O = (2E)-4-hydroxy-3-methylbut-2-enyl diphosphate + 2 reduced [2Fe-2S]-[ferredoxin] + 2 H(+). It carries out the reaction dimethylallyl diphosphate + 2 oxidized [2Fe-2S]-[ferredoxin] + H2O = (2E)-4-hydroxy-3-methylbut-2-enyl diphosphate + 2 reduced [2Fe-2S]-[ferredoxin] + 2 H(+). Its pathway is isoprenoid biosynthesis; dimethylallyl diphosphate biosynthesis; dimethylallyl diphosphate from (2E)-4-hydroxy-3-methylbutenyl diphosphate: step 1/1. It participates in isoprenoid biosynthesis; isopentenyl diphosphate biosynthesis via DXP pathway; isopentenyl diphosphate from 1-deoxy-D-xylulose 5-phosphate: step 6/6. Its function is as follows. Catalyzes the conversion of 1-hydroxy-2-methyl-2-(E)-butenyl 4-diphosphate (HMBPP) into a mixture of isopentenyl diphosphate (IPP) and dimethylallyl diphosphate (DMAPP). Acts in the terminal step of the DOXP/MEP pathway for isoprenoid precursor biosynthesis. This is 4-hydroxy-3-methylbut-2-enyl diphosphate reductase from Campylobacter curvus (strain 525.92).